The primary structure comprises 216 residues: Probable nicotinate-nucleotide adenylyltransferase (216 aa).

This sequence belongs to the NadD family.

The catalysed reaction is nicotinate beta-D-ribonucleotide + ATP + H(+) = deamido-NAD(+) + diphosphate. Its pathway is cofactor biosynthesis; NAD(+) biosynthesis; deamido-NAD(+) from nicotinate D-ribonucleotide: step 1/1. Catalyzes the reversible adenylation of nicotinate mononucleotide (NaMN) to nicotinic acid adenine dinucleotide (NaAD). The chain is Probable nicotinate-nucleotide adenylyltransferase from Buchnera aphidicola subsp. Schizaphis graminum (strain Sg).